Consider the following 220-residue polypeptide: UPF0758 protein Asuc_0013 (220 aa).

Residues Glu98–Leu220 enclose the MPN domain. Residues His169, His171, and Asp182 each coordinate Zn(2+). The JAMM motif signature appears at His169–Asp182.

The protein belongs to the UPF0758 family.

This chain is UPF0758 protein Asuc_0013, found in Actinobacillus succinogenes (strain ATCC 55618 / DSM 22257 / CCUG 43843 / 130Z).